Here is a 338-residue protein sequence, read N- to C-terminus: MVTQVGINGFGRIGRIVLRASLSNPEVQVVAINDPFIPLEYMVYMFKYDSVHGRFQGTVEAKDGKLVVNGKEISVFSERDPAQIPWGSVEAAYVVESTGVFTSIDAASAHLQGGAKKVIISAPSGDAPMFVCGVNLEKYTSDLKVISNASCTTNCLAPLAKVINDNFGIVEGLMTTVHATTATQKTVDGPSNKDWRGGRGAGANIIPSSTGAAKAVGKVIPELNGKLTGMAFRVPTPDVSVVDLTVRLEKGATYEEIKAVIKKASENELKGILGYTNDQVVSTDFVGDAQSSIFDAAAGIALNDKFVKLVSWYDNEFGYSNRVIDLLAYAAKVDAAAQ.

NAD(+)-binding positions include 12–13 (RI), aspartate 34, and arginine 79. D-glyceraldehyde 3-phosphate is bound by residues 150 to 152 (SCT), threonine 181, 210 to 211 (TG), and arginine 233. The active-site Nucleophile is the cysteine 151. Asparagine 315 is an NAD(+) binding site.

This sequence belongs to the glyceraldehyde-3-phosphate dehydrogenase family. In terms of assembly, homotetramer.

The protein resides in the cytoplasm. It catalyses the reaction D-glyceraldehyde 3-phosphate + phosphate + NAD(+) = (2R)-3-phospho-glyceroyl phosphate + NADH + H(+). It participates in carbohydrate degradation; glycolysis; pyruvate from D-glyceraldehyde 3-phosphate: step 1/5. This is Glyceraldehyde-3-phosphate dehydrogenase 2 (GPD2) from Mucor circinelloides f. lusitanicus (Mucor racemosus var. lusitanicus).